Reading from the N-terminus, the 147-residue chain is UPF0306 protein YhbP (147 aa).

The protein belongs to the UPF0306 family.

The polypeptide is UPF0306 protein YhbP (Salmonella choleraesuis (strain SC-B67)).